Here is an 85-residue protein sequence, read N- to C-terminus: Sec-independent protein translocase protein TatA (85 aa).

The chain crosses the membrane as a helical span at residues valine 7–phenylalanine 27. The tract at residues leucine 50–alanine 85 is disordered. Over residues glutamate 64–threonine 76 the composition is skewed to basic and acidic residues.

The protein belongs to the TatA/E family. Forms a complex with TatC.

Its subcellular location is the cell inner membrane. Part of the twin-arginine translocation (Tat) system that transports large folded proteins containing a characteristic twin-arginine motif in their signal peptide across membranes. TatA could form the protein-conducting channel of the Tat system. This chain is Sec-independent protein translocase protein TatA, found in Leptospira interrogans serogroup Icterohaemorrhagiae serovar Lai (strain 56601).